Consider the following 468-residue polypeptide: UDP-glucosyl transferase 74CD1 (468 aa).

Glycine 20 is a binding site for UDP-alpha-D-glucose. Histidine 21 acts as the Proton acceptor in catalysis. The active-site Charge relay is the aspartate 114. UDP-alpha-D-glucose contacts are provided by serine 292, tryptophan 344, glutamine 347, histidine 362, tryptophan 365, asparagine 366, serine 367, glutamate 370, aspartate 386, and glutamine 387.

It belongs to the UDP-glycosyltransferase family. As to expression, mainly expressed in flowers, flower buds and young leaves, and, to a lesser extent, in old leaves, stems and roots.

Its pathway is secondary metabolite biosynthesis; terpenoid biosynthesis. Functionally, component of the oleanane-type triterpene saponins (e.g. saponarioside A and saponarioside B) biosynthetic pathway, leading to the production of natural products with detergent properties used as traditional sources of soap. A glycosyltransferase that, together with SDR1, mediates the conversion of QA-tri to QA-triF; UGT74CD1 may transfer 4-keto-6-deoxy-glucose to QA-tri, which is in turn reduced to D-fucose by SDR1, thus leading to QA-triF formation via the initiation of the C-28 sugar chain. The protein is UDP-glucosyl transferase 74CD1 of Saponaria officinalis (Common soapwort).